The following is a 163-amino-acid chain: Lipoprotein signal peptidase (163 aa).

Helical transmembrane passes span 11–31, 63–83, and 88–108; these read ILIAVFVVIFDQVTKYIIATT, KMTFFFIITIIILIALVYFFI, and YNLFMQVAISLLFAGALGNFI. Active-site residues include Asp-118 and Asp-136. The helical transmembrane segment at 131 to 151 threads the bilayer; sequence IFNIADSSLTIGVILIIIALL.

Belongs to the peptidase A8 family.

The protein resides in the cell membrane. It carries out the reaction Release of signal peptides from bacterial membrane prolipoproteins. Hydrolyzes -Xaa-Yaa-Zaa-|-(S,diacylglyceryl)Cys-, in which Xaa is hydrophobic (preferably Leu), and Yaa (Ala or Ser) and Zaa (Gly or Ala) have small, neutral side chains.. It functions in the pathway protein modification; lipoprotein biosynthesis (signal peptide cleavage). This protein specifically catalyzes the removal of signal peptides from prolipoproteins. This is Lipoprotein signal peptidase from Staphylococcus aureus (strain MRSA252).